A 931-amino-acid polypeptide reads, in one-letter code: Protocadherin gamma-A4 (931 aa).

The N-terminal stretch at 1-28 (MAAPPARPDHTRLLHICLLLGVLVEIRA) is a signal peptide. 6 Cadherin domains span residues 29–133 (EQIR…PPSF), 134–242 (GTEQ…APVF), 243–347 (TQPE…APEV), 348–452 (TVTS…PPTF), 453–567 (PHAS…YPTF), and 570–682 (DDST…KPSA). The Extracellular portion of the chain corresponds to 29 to 692 (EQIRYSVFEE…DPDDSGLTLY (664 aa)). Residues N419 and N545 are each glycosylated (N-linked (GlcNAc...) asparagine). A helical membrane pass occupies residues 693–713 (LVVSVAAVSCVFLAFVTVLLA). Over 714–931 (LKLRRWHKSR…KKKSGKKEKK (218 aa)) the chain is Cytoplasmic. Disordered regions lie at residues 801–840 (KGDPNLQQAPPNTDWRFSQAQRPGTSGSQNGDDTGTWPNN) and 901–931 (ATLTNAAGKRDGKAPAGGNGNKKKSGKKEKK). The span at 805-840 (NLQQAPPNTDWRFSQAQRPGTSGSQNGDDTGTWPNN) shows a compositional bias: polar residues. Residues 921 to 931 (NKKKSGKKEKK) are compositionally biased toward basic residues.

The protein localises to the cell membrane. Its function is as follows. Potential calcium-dependent cell-adhesion protein. May be involved in the establishment and maintenance of specific neuronal connections in the brain. The protein is Protocadherin gamma-A4 (PCDHGA4) of Pan troglodytes (Chimpanzee).